Consider the following 456-residue polypeptide: Argininosuccinate lyase (456 aa).

This sequence belongs to the lyase 1 family. Argininosuccinate lyase subfamily.

It localises to the cytoplasm. The enzyme catalyses 2-(N(omega)-L-arginino)succinate = fumarate + L-arginine. The protein operates within amino-acid biosynthesis; L-arginine biosynthesis; L-arginine from L-ornithine and carbamoyl phosphate: step 3/3. The polypeptide is Argininosuccinate lyase (Listeria monocytogenes serotype 4b (strain CLIP80459)).